A 313-amino-acid polypeptide reads, in one-letter code: D-alanine--D-alanine ligase (313 aa).

In terms of domain architecture, ATP-grasp spans Lys108–Ser308. Val138–Tyr193 lines the ATP pocket. Mg(2+) is bound by residues Asp262, Glu275, and Asn277.

It belongs to the D-alanine--D-alanine ligase family. Requires Mg(2+) as cofactor. The cofactor is Mn(2+).

Its subcellular location is the cytoplasm. The catalysed reaction is 2 D-alanine + ATP = D-alanyl-D-alanine + ADP + phosphate + H(+). Its pathway is cell wall biogenesis; peptidoglycan biosynthesis. Its function is as follows. Cell wall formation. This is D-alanine--D-alanine ligase from Burkholderia cenocepacia (strain ATCC BAA-245 / DSM 16553 / LMG 16656 / NCTC 13227 / J2315 / CF5610) (Burkholderia cepacia (strain J2315)).